The following is a 486-amino-acid chain: ATP synthase subunit beta (486 aa).

Over residues 1–12 (MTTTAEKTDRPG) the composition is skewed to basic and acidic residues. Positions 1-22 (MTTTAEKTDRPGKPGSSDTSGR) are disordered. Residue 171–178 (GGAGVGKT) participates in ATP binding.

Belongs to the ATPase alpha/beta chains family. In terms of assembly, F-type ATPases have 2 components, CF(1) - the catalytic core - and CF(0) - the membrane proton channel. CF(1) has five subunits: alpha(3), beta(3), gamma(1), delta(1), epsilon(1). CF(0) has three main subunits: a(1), b(2) and c(9-12). The alpha and beta chains form an alternating ring which encloses part of the gamma chain. CF(1) is attached to CF(0) by a central stalk formed by the gamma and epsilon chains, while a peripheral stalk is formed by the delta and b chains.

The protein resides in the cell membrane. The enzyme catalyses ATP + H2O + 4 H(+)(in) = ADP + phosphate + 5 H(+)(out). Produces ATP from ADP in the presence of a proton gradient across the membrane. The catalytic sites are hosted primarily by the beta subunits. The polypeptide is ATP synthase subunit beta (Mycobacterium tuberculosis (strain ATCC 25177 / H37Ra)).